Reading from the N-terminus, the 264-residue chain is S-adenosylmethionine decarboxylase proenzyme (264 aa).

Serine 112 (schiff-base intermediate with substrate; via pyruvic acid) is an active-site residue. At serine 112 the chain carries Pyruvic acid (Ser); by autocatalysis. The active-site Proton acceptor; for processing activity is the histidine 117. Cysteine 140 acts as the Proton donor; for catalytic activity in catalysis.

The protein belongs to the prokaryotic AdoMetDC family. Type 2 subfamily. As to quaternary structure, heterooctamer of four alpha and four beta chains arranged as a tetramer of alpha/beta heterodimers. Pyruvate serves as cofactor. Is synthesized initially as an inactive proenzyme. Formation of the active enzyme involves a self-maturation process in which the active site pyruvoyl group is generated from an internal serine residue via an autocatalytic post-translational modification. Two non-identical subunits are generated from the proenzyme in this reaction, and the pyruvate is formed at the N-terminus of the alpha chain, which is derived from the carboxyl end of the proenzyme. The post-translation cleavage follows an unusual pathway, termed non-hydrolytic serinolysis, in which the side chain hydroxyl group of the serine supplies its oxygen atom to form the C-terminus of the beta chain, while the remainder of the serine residue undergoes an oxidative deamination to produce ammonia and the pyruvoyl group blocking the N-terminus of the alpha chain.

It carries out the reaction S-adenosyl-L-methionine + H(+) = S-adenosyl 3-(methylsulfanyl)propylamine + CO2. It participates in amine and polyamine biosynthesis; S-adenosylmethioninamine biosynthesis; S-adenosylmethioninamine from S-adenosyl-L-methionine: step 1/1. Functionally, catalyzes the decarboxylation of S-adenosylmethionine to S-adenosylmethioninamine (dcAdoMet), the propylamine donor required for the synthesis of the polyamines spermine and spermidine from the diamine putrescine. This is S-adenosylmethionine decarboxylase proenzyme from Salmonella typhi.